A 260-amino-acid chain; its full sequence is Isoprenyl transferase (260 aa).

Residue D40 is part of the active site. A Mg(2+)-binding site is contributed by D40. Substrate is bound by residues 41-44, W45, R53, H57, and 85-87; these read GNGR and STE. N88 (proton acceptor) is an active-site residue. Substrate-binding positions include W89, R91, R208, and 214–216; that span reads RLS. E227 serves as a coordination point for Mg(2+).

Belongs to the UPP synthase family. Homodimer. It depends on Mg(2+) as a cofactor.

Functionally, catalyzes the condensation of isopentenyl diphosphate (IPP) with allylic pyrophosphates generating different type of terpenoids. The polypeptide is Isoprenyl transferase (Bacillus subtilis (strain 168)).